A 292-amino-acid polypeptide reads, in one-letter code: 4-hydroxy-tetrahydrodipicolinate synthase (292 aa).

Residue threonine 45 coordinates pyruvate. Catalysis depends on tyrosine 133, which acts as the Proton donor/acceptor. Catalysis depends on lysine 161, which acts as the Schiff-base intermediate with substrate. Pyruvate is bound at residue isoleucine 203.

It belongs to the DapA family. Homotetramer; dimer of dimers.

The protein resides in the cytoplasm. It carries out the reaction L-aspartate 4-semialdehyde + pyruvate = (2S,4S)-4-hydroxy-2,3,4,5-tetrahydrodipicolinate + H2O + H(+). It functions in the pathway amino-acid biosynthesis; L-lysine biosynthesis via DAP pathway; (S)-tetrahydrodipicolinate from L-aspartate: step 3/4. Catalyzes the condensation of (S)-aspartate-beta-semialdehyde [(S)-ASA] and pyruvate to 4-hydroxy-tetrahydrodipicolinate (HTPA). The chain is 4-hydroxy-tetrahydrodipicolinate synthase from Azoarcus sp. (strain BH72).